Consider the following 183-residue polypeptide: MQDYKIKIENVVASTQIGENIDLNKISREIKDSEYKPKQFPGLVLRTKEPKAAALVFRSGKVVCTGSKSVEDARRAVKQIVKMLKEIGISVIDEPEVKVQNIVASADLGVDLNLNAIAIGLGLENIEYEPEQFPGLVYRLDNPRVVVLIFGSGKMVVTGGKSPEDARKAVERISEELRTLGLM.

Tandem repeats lie at residues 8-84 (IENV…VKML) and 99-177 (VQNI…SEEL).

Belongs to the TBP family.

Functionally, general factor that plays a role in the activation of archaeal genes transcribed by RNA polymerase. Binds specifically to the TATA box promoter element which lies close to the position of transcription initiation. This Archaeoglobus fulgidus (strain ATCC 49558 / DSM 4304 / JCM 9628 / NBRC 100126 / VC-16) protein is TATA-box-binding protein (tbp).